The sequence spans 364 residues: Apelin receptor (364 aa).

Over 1 to 39 (MATDEFSSSTTPSYDYYDYTNESGLPPCDETDWDLSYSL) the chain is Extracellular. N-linked (GlcNAc...) asparagine glycosylation occurs at Asn21. 2 disulfides stabilise this stretch: Cys28–Cys288 and Cys110–Cys187. A helical transmembrane segment spans residues 40-60 (LPVFYMIVFVLGLSGNGVVIF). The Cytoplasmic portion of the chain corresponds to 61-78 (TVWKAKPKRRSADTYIGN). A helical membrane pass occupies residues 79–99 (LALADLAFVVTLPLWATYTAL). Over 100–112 (GFHWPFGSALCKL) the chain is Extracellular. Residues 113-133 (SSYLVLLNMFASVFCLTCLSF) form a helical membrane-spanning segment. Residues 134 to 153 (DRYLAIVHSLSSAKLRSRSS) are Cytoplasmic-facing. A helical transmembrane segment spans residues 154–174 (ILVSLAVIWLFSGLLALPSLI). Residues 175-201 (LRDTRVEGNNTICDLDFSGVSSKENEN) lie on the Extracellular side of the membrane. Residue Asn183 is glycosylated (N-linked (GlcNAc...) asparagine). Residues 202–222 (FWIGGLSILTTVPGFLLPLLL) form a helical membrane-spanning segment. Topologically, residues 223-250 (MTIFYCFIGGKVTMHFQNLKKEEQKKKR) are cytoplasmic. The chain crosses the membrane as a helical span at residues 251–271 (LLKIIITLVVVFAICWLPFHI). At 272–298 (LKTIHFLDLMGFLELSCSTQNIIVSLH) the chain is on the extracellular side. The helical transmembrane segment at 299-319 (PYATCLAYINSCLNPFLYAFF) threads the bilayer. At 320–364 (DLRFRSQCFFFFGFKKALQGHLSNTSSSLSAQTQKSEIHSLATKV) the chain is on the cytoplasmic side.

Belongs to the G-protein coupled receptor 1 family.

It is found in the cell membrane. In terms of biological role, g protein-coupled receptor for peptide hormones apelin (apln) and apelin receptor early endogenous ligand (apela), that plays a role in the regulation of normal cardiovascular function and fluid homeostasis. When acting as apelin receptor, activates both G(i) protein pathway that inhibits adenylate cyclase activity, and the beta-arrestin pathway that promotes internalization of the receptor. Also functions as mechanoreceptor that is activated by pathological stimuli in a G-protein-independent fashion to induce beta-arrestin signaling, hence eliciting cardiac hypertrophy. However, the presence of apelin ligand blunts cardiac hypertrophic induction from APLNR/APJ on response to pathological stimuli. Plays a key role in early development such as gastrulation, blood vessels formation and heart morphogenesis by acting as a receptor for apela hormone, promoting endoderm and mesendoderm cell migration and regulating the migration of cells fated to become myocardial progenitors, respectively. Promotes angioblast migration toward the embryonic midline, i.e. the position of the future vessel formation, during vasculogenesis. May promote sinus venosus (SV)-derived endothelial cells migration into the developing heart to promote coronary blood vessel development. Required for cardiovascular development, particularly for intersomitic vein angiogenesis. Plays also a role in various processes in adults such as regulation of blood vessel formation, blood pressure, heart contractility, and heart failure. Acts upstream of the i/o type of G-alpha proteins in the differentiation of endothelium, erythroid cells, myeloid cells and cardiomyocytes. This Xenopus tropicalis (Western clawed frog) protein is Apelin receptor (aplnr).